Reading from the N-terminus, the 201-residue chain is Ribonuclease HII (201 aa).

Residues 12-201 (DLVAGVDEVG…VRELLDVPVQ (190 aa)) enclose the RNase H type-2 domain. The a divalent metal cation site is built by Asp18, Glu19, and Asp110.

It belongs to the RNase HII family. Mn(2+) is required as a cofactor. The cofactor is Mg(2+).

It localises to the cytoplasm. It catalyses the reaction Endonucleolytic cleavage to 5'-phosphomonoester.. In terms of biological role, endonuclease that specifically degrades the RNA of RNA-DNA hybrids. The sequence is that of Ribonuclease HII from Pseudomonas aeruginosa (strain UCBPP-PA14).